The sequence spans 90 residues: Nodulation protein F (90 aa).

The Carrier domain maps to Gln4–Ala89. Ser46 is subject to O-(pantetheine 4'-phosphoryl)serine. The tract at residues Arg65–His90 is disordered. Over residues Arg78–His90 the composition is skewed to basic residues.

Post-translationally, 4'-phosphopantetheine is transferred from CoA to a specific serine of apo-NodF.

Proposed to synthesize nod factor fatty acyl chain. Involved in trans-2,trans-4,trans-6,cis-11-octadecatetraenoic acid biosynthesis. The protein is Nodulation protein F (nodF) of Rhizobium meliloti (Ensifer meliloti).